A 132-amino-acid chain; its full sequence is ATP synthase epsilon chain, chloroplastic (132 aa).

This sequence belongs to the ATPase epsilon chain family. F-type ATPases have 2 components, CF(1) - the catalytic core - and CF(0) - the membrane proton channel. CF(1) has five subunits: alpha(3), beta(3), gamma(1), delta(1), epsilon(1). CF(0) has three main subunits: a, b and c.

It is found in the plastid. The protein localises to the chloroplast thylakoid membrane. Functionally, produces ATP from ADP in the presence of a proton gradient across the membrane. This Calycanthus floridus var. glaucus (Eastern sweetshrub) protein is ATP synthase epsilon chain, chloroplastic.